Consider the following 115-residue polypeptide: NADH-ubiquinone oxidoreductase chain 3 (115 aa).

Helical transmembrane passes span 4 to 24 (LLTM…AFWL), 55 to 75 (FFLV…LLPI), and 84 to 104 (INTM…GLAY).

It belongs to the complex I subunit 3 family. As to quaternary structure, core subunit of respiratory chain NADH dehydrogenase (Complex I) which is composed of 45 different subunits. Interacts with TMEM186. Interacts with TMEM242.

The protein resides in the mitochondrion inner membrane. It catalyses the reaction a ubiquinone + NADH + 5 H(+)(in) = a ubiquinol + NAD(+) + 4 H(+)(out). In terms of biological role, core subunit of the mitochondrial membrane respiratory chain NADH dehydrogenase (Complex I) which catalyzes electron transfer from NADH through the respiratory chain, using ubiquinone as an electron acceptor. Essential for the catalytic activity of complex I. The polypeptide is NADH-ubiquinone oxidoreductase chain 3 (Neotoma lepida (Desert woodrat)).